A 338-amino-acid chain; its full sequence is Protein RecA (338 aa).

68–75 (GPESSGKT) is an ATP binding site.

The protein belongs to the RecA family.

The protein resides in the cytoplasm. Its function is as follows. Can catalyze the hydrolysis of ATP in the presence of single-stranded DNA, the ATP-dependent uptake of single-stranded DNA by duplex DNA, and the ATP-dependent hybridization of homologous single-stranded DNAs. It interacts with LexA causing its activation and leading to its autocatalytic cleavage. This chain is Protein RecA, found in Citrifermentans bemidjiense (strain ATCC BAA-1014 / DSM 16622 / JCM 12645 / Bem) (Geobacter bemidjiensis).